Reading from the N-terminus, the 163-residue chain is Developmental pluripotency-associated protein 3 (163 aa).

In terms of tissue distribution, preferentially expressed in oocyte.

It localises to the nucleus. The protein resides in the cytoplasm. Primordial germ cell (PGCs)-specific protein involved in epigenetic chromatin reprogramming in the zygote following fertilization. In zygotes, DNA demethylation occurs selectively in the paternal pronucleus before the first cell division, while the adjacent maternal pronucleus and certain paternally-imprinted loci are protected from this process. Participates in protection of DNA methylation in the maternal pronucleus by preventing conversion of 5mC to 5hmC: specifically recognizes and binds histone H3 dimethylated at 'Lys-9' (H3K9me2) on maternal genome, and protects maternal genome from TET3-mediated conversion to 5hmC and subsequent DNA demethylation. Does not bind paternal chromatin, which is mainly packed into protamine and does not contain much H3K9me2 mark. Also protects imprinted loci that are marked with H3K9me2 in mature sperm from DNA demethylation in early embryogenesis. May be important for the totipotent/pluripotent states continuing through preimplantation development. Also involved in chromatin condensation in oocytogenesis. In Bos taurus (Bovine), this protein is Developmental pluripotency-associated protein 3 (DPPA3).